A 427-amino-acid polypeptide reads, in one-letter code: Male abnormal protein mab-31 (427 aa).

The tract at residues 68–102 (PIGTGRFPNPSPPRSSSGTNTPIRKTPGSRPDRGK) is disordered.

Its subcellular location is the nucleus. Functionally, putative transcription factor. Acts in a TGF-beta-like pathway during development of male-specific genital sensilla (simple sense organs), known as rays. Involved in production of reactive oxygen species (ROS), acting downstream of the TGF-beta-like dbl-1 signaling pathway. Involved in locomotory behavior. The protein is Male abnormal protein mab-31 of Caenorhabditis elegans.